The chain runs to 191 residues: Protein DMP10 (191 aa).

4 helical membrane passes run 15 to 35 (FANL…PSFS), 48 to 68 (LLTI…SFTD), 114 to 134 (LSFV…ALAV), and 158 to 178 (LMIK…FAIF).

It belongs to the plant DMP1 protein family. As to expression, restricted to flowers.

The protein localises to the membrane. In terms of biological role, involved in membrane remodeling. This chain is Protein DMP10, found in Arabidopsis thaliana (Mouse-ear cress).